Reading from the N-terminus, the 218-residue chain is Variable small protein 8 (218 aa).

The signal sequence occupies residues 1-18 (MRKRISAIIMTLFMVFMS). C19 carries N-palmitoyl cysteine lipidation. C19 carries S-diacylglycerol cysteine lipidation.

Belongs to the variable small protein (Vsp) family.

It is found in the cell outer membrane. The Vlp and Vsp proteins are antigenically distinct proteins, only one vlp or vsp gene is transcriptionally active at any one time. Switching between these genes is a mechanism of host immune response evasion. The protein is Variable small protein 8 of Borrelia hermsii.